The primary structure comprises 231 residues: NADH-ubiquinone oxidoreductase chain 4 (231 aa).

6 helical membrane passes run 1–21 (PIAG…YGII), 34–54 (LFIP…LTCL), 61–80 (SLIA…AITI), 84–106 (WGLS…LFCL), 118–138 (VLIL…WWLL), and 156–178 (LLIM…LSML).

The protein belongs to the complex I subunit 4 family.

It is found in the mitochondrion membrane. It carries out the reaction a ubiquinone + NADH + 5 H(+)(in) = a ubiquinol + NAD(+) + 4 H(+)(out). In terms of biological role, core subunit of the mitochondrial membrane respiratory chain NADH dehydrogenase (Complex I) that is believed to belong to the minimal assembly required for catalysis. Complex I functions in the transfer of electrons from NADH to the respiratory chain. The immediate electron acceptor for the enzyme is believed to be ubiquinone. The protein is NADH-ubiquinone oxidoreductase chain 4 (MT-ND4) of Azemiops feae (Fea's viper).